We begin with the raw amino-acid sequence, 293 residues long: Ribosomal protein L11 methyltransferase (293 aa).

Positions 145, 166, 188, and 230 each coordinate S-adenosyl-L-methionine.

The protein belongs to the methyltransferase superfamily. PrmA family.

It localises to the cytoplasm. The catalysed reaction is L-lysyl-[protein] + 3 S-adenosyl-L-methionine = N(6),N(6),N(6)-trimethyl-L-lysyl-[protein] + 3 S-adenosyl-L-homocysteine + 3 H(+). In terms of biological role, methylates ribosomal protein L11. The sequence is that of Ribosomal protein L11 methyltransferase from Serratia proteamaculans (strain 568).